A 712-amino-acid chain; its full sequence is MAQSSPQLDIQVLHDLRQRFPEIPEGVVSQCMLQNNNNLEACCRALSQESSKYLYMEYHSPDDNRMNRNRLLHINLGIHSPSSYHPGDGAQLNGGRTLVHSSSDGHIDPQHAAGKQLICLVQEPHSAPAVVAATPNYNPFFMNEQNRSAATPPSQPPQQPSSMQTGMNPSAMQGPSPPPPPPSYMHIPRYSTNPITVTVSQNLPSGQTVPRALQILPQIPSNLYGSPGSIYIRQTSQSSSGRQTPQSTPWQSSPQGPVPHYSQRPLPVYPHQQNYQPSQYSPKQQQIPQSAYHSPPPSQCPSPFSSPQHQVQPSQLGHIFMPPSPSTTPPHPYQQGPPSYQKQGSHSVAYLPYTASSLSKGSMKKIEITVEPSQRPGTAINRSPSPISNQPSPRNQHSLYTATTPPSSSPSRGISSQPKPPFSVNPVYITYTQPTGPSCTPSPSPRVIPNPTTVFKITVGRATTENLLNLVDQEERSAAPEPIQPISVIPGSGGEKGSHKYQRSSSSGSDDYAYTQALLLHQRARMERLAKQLKLEKEELERLKSEVNGMEHDLMQRRLRRVSCTTAIPTPEEMTRLRSMNRQLQINVDCTLKEVDLLQSRGNFDPKAMNNFYDNIEPGPVVPPKPSKKDSSDPCTIERKARRISVTSKVQADIHDTQAAAADEHRTGSTQSPRTQPRDEDYEGAPWNCDSCTFLNHPALNRCEQCEMPRYT.

An N-acetylalanine modification is found at Ala2. Positions 8-51 (LDIQVLHDLRQRFPEIPEGVVSQCMLQNNNNLEACCRALSQESS) constitute a CUE domain. Ser60, Ser101, and Ser103 each carry phosphoserine. Disordered stretches follow at residues 141–189 (FMNE…HIPR), 227–345 (PGSI…KQGS), 369–447 (TVEP…SPRV), and 475–509 (ERSAAPEPIQPISVIPGSGGEKGSHKYQRSSSSGS). Residues 163–173 (MQTGMNPSAMQ) are compositionally biased toward polar residues. Composition is skewed to low complexity over residues 233–249 (RQTSQSSSGRQTPQSTP) and 269–290 (YPHQQNYQPSQYSPKQQQIPQS). Over residues 322–332 (PPSPSTTPPHP) the composition is skewed to pro residues. Polar residues-rich tracts occupy residues 336–345 (GPPSYQKQGS) and 371–404 (EPSQRPGTAINRSPSPISNQPSPRNQHSLYTATT). Ser385 is subject to Phosphoserine. Thr404 carries the phosphothreonine modification. A compositionally biased stretch (low complexity) spans 405 to 417 (PPSSSPSRGISSQ). Ser409 and Ser492 each carry phosphoserine. Ser506 carries the phosphoserine; by MAPKAPK2 and MAPKAPK3 modification. Positions 517 to 559 (ALLLHQRARMERLAKQLKLEKEELERLKSEVNGMEHDLMQRRL) form a coiled coil. The disordered stretch occupies residues 609–636 (MNNFYDNIEPGPVVPPKPSKKDSSDPCT). Residues 627–636 (SKKDSSDPCT) show a composition bias toward basic and acidic residues. Residue Lys649 forms a Glycyl lysine isopeptide (Lys-Gly) (interchain with G-Cter in ubiquitin) linkage. The segment covering 658-667 (QAAAADEHRT) has biased composition (basic and acidic residues). The segment at 658 to 682 (QAAAADEHRTGSTQSPRTQPRDEDY) is disordered. The segment at 682–712 (YEGAPWNCDSCTFLNHPALNRCEQCEMPRYT) adopts a RanBP2-type zinc-finger fold. Residue Cys692 is modified to (Microbial infection) S-methylcysteine.

In terms of assembly, interacts with TAB1, TAB2, MAP3K7, TRAF2 and TRAF6. The minimal TAB3-containing complex (TAB1-MAP3K7-TAB3) appears not to contain TAB2. However, it seems sensible to consider that TAB2 may also join this complex and may act in a cooperative manner with TAB3. Interacts with DYNC2I2 (via the WD domains). Interacts with RBCK1. Binds 'Lys-63'-linked polyubiquitin chains. Interacts with TRIM5. Interacts with TRIM38 (via B30.2/SPRY domain), leading to its translocation to lysosomes and degradation. Interacts with ASB1. As to quaternary structure, (Microbial infection) Interacts with M.tuberculosis PtpA, which blocks the NF-kappa-B signaling pathway. In terms of processing, ubiquitinated; following IL1 stimulation or TRAF6 overexpression. Ubiquitinated by AMFR via 'Lys-27'-linked polyubiquitination; leading to TAK1/MAP3K7 activation. Degraded in a lysosome-dependent manner following interaction with TRIM38. Post-translationally, phosphorylated at Ser-506 by MAPKAPK2 and MAPKAPK3 following IL1 treatment. In terms of processing, (Microbial infection) Methylated at Cys-692 by enteropathogenic E.coli protein NleE or S.flexneri protein OspZ: methylation disrupts zinc-binding and ability to bind 'Lys-63'-linked ubiquitin, leading to NF-kappa-B inactivation. As to expression, widely expressed. Constitutively overexpressed in certain tumor tissues. Major transcript. In terms of tissue distribution, minor transcript.

Adapter required to activate the JNK and NF-kappa-B signaling pathways through the specific recognition of 'Lys-63'-linked polyubiquitin chains by its RanBP2-type zinc finger (NZF). Acts as an adapter linking MAP3K7/TAK1 and TRAF6 to 'Lys-63'-linked polyubiquitin chains. The RanBP2-type zinc finger (NZF) specifically recognizes Lys-63'-linked polyubiquitin chains unanchored or anchored to the substrate proteins such as RIPK1/RIP1 and RIPK2: this acts as a scaffold to organize a large signaling complex to promote autophosphorylation of MAP3K7/TAK1, and subsequent activation of I-kappa-B-kinase (IKK) core complex by MAP3K7/TAK1. In terms of biological role, may be an oncogenic factor. This Homo sapiens (Human) protein is TGF-beta-activated kinase 1 and MAP3K7-binding protein 3.